The chain runs to 247 residues: MNDKRYMLIIAICLIFLSILVYSIHFLIFGKVDYILSYFLLHLAFVPIEVLLVSLIIEKILDYREKKKILEKLNMVVGSFFNSVGEELLKIILEGDVGNIRDYLKISDEWNDKTYEETKKLLMNYDCNIDIEKIDLYKLKNLLERNKEFLLRLMENPLLLEHESFTELLLAVFHLADELHRREDLSNLPKSDLDHLKNDIIRVYKLLIIQWLNYLMHLKDNYPYLYSLCLRANPFDNKSIIIEEDDK.

Transmembrane regions (helical) follow at residues 9 to 29 (IIAICLIFLSILVYSIHFLIF) and 37 to 57 (SYFLLHLAFVPIEVLLVSLII).

The protein localises to the cell membrane. This is an uncharacterized protein from Methanocaldococcus jannaschii (strain ATCC 43067 / DSM 2661 / JAL-1 / JCM 10045 / NBRC 100440) (Methanococcus jannaschii).